A 452-amino-acid polypeptide reads, in one-letter code: Growth/differentiation factor 6 (452 aa).

The first 22 residues, 1–22 (MDTPRVLLWAIFLISFLWDLPG), serve as a signal peptide directing secretion. Residues 23-332 (FQQASISSSS…LPSPGRRRRR (310 aa)) constitute a propeptide that is removed on maturation. The tract at residues 29 to 93 (SSSSSTELDS…QEPPGRGPRV (65 aa)) is disordered. Basic and acidic residues-rich tracts occupy residues 37–46 (DSTKDVENRK) and 58–75 (AEGR…ELRR). Residue N115 is glycosylated (N-linked (GlcNAc...) asparagine). 2 disordered regions span residues 244–267 (RDSG…LGFG) and 301–348 (AEAA…KKSR). Low complexity predominate over residues 301–317 (AEAAGAEGSWPAPSGAP). Residues 327 to 348 (GRRRRRTALSSRHGKRHGKKSR) show a composition bias toward basic residues. Cystine bridges form between C351-C417, C380-C449, and C384-C451.

This sequence belongs to the TGF-beta family. In terms of assembly, homodimer; disulfide-linked.

The protein localises to the secreted. Growth factor that controls proliferation and cellular differentiation in the retina and bone formation. Plays a key role in regulating apoptosis during retinal development. Establishes dorsal-ventral positional information in the retina and controls the formation of the retinotectal map. Required for normal formation of bones and joints in the limbs, skull, digits and axial skeleton. Plays a key role in establishing boundaries between skeletal elements during development. Regulation of GDF6 expression seems to be a mechanism for evolving species-specific changes in skeletal structures. Seems to positively regulate differentiation of chondrogenic tissue through the growth factor receptors subunits BMPR1A, BMPR1B, BMPR2 and ACVR2A, leading to the activation of SMAD1-SMAD5-SMAD8 complex. The regulation of chondrogenic differentiation is inhibited by NOG. Also involved in the induction of adipogenesis from mesenchymal stem cells. This mechanism acts through the growth factor receptors subunits BMPR1A, BMPR2 and ACVR2A and the activation of SMAD1-SMAD5-SMAD8 complex and MAPK14/p38. The protein is Growth/differentiation factor 6 (Gdf6) of Rattus norvegicus (Rat).